Consider the following 470-residue polypeptide: Pyoverdine export outer membrane protein OpmQ (470 aa).

Residues 1–18 form the signal peptide; sequence MTLPRHLCLLPLSLSLLA. Residue C19 is the site of N-palmitoyl cysteine attachment. C19 carries S-diacylglycerol cysteine lipidation.

This sequence belongs to the outer membrane factor (OMF) (TC 1.B.17) family. Part of the tripartite efflux system PvdRT-OpmQ, which is composed of an inner membrane component with both ATPase and permease domains, PvdT, a periplasmic membrane fusion protein, PvdR, and an outer membrane component, OpmQ.

It is found in the cell outer membrane. Its function is as follows. Part of the tripartite efflux system PvdRT-OpmQ required for the secretion into the extracellular milieu of the siderophore pyoverdine (PVD), which is involved in iron acquisition. The system is responsible for export of newly synthesized PVD after the final steps of biosynthesis have taken place in the periplasm. It is also responsible for recycling of PVD after internalization of ferri-PVD into the periplasm by the outer-membrane receptor FpvA and release of iron from PVD, thus making PVD available for new cycles of iron uptake. Contributes to resistance against ampicillin. The chain is Pyoverdine export outer membrane protein OpmQ from Pseudomonas putida (strain ATCC 47054 / DSM 6125 / CFBP 8728 / NCIMB 11950 / KT2440).